The primary structure comprises 251 residues: Small ribosomal subunit protein uS2 (251 aa).

This sequence belongs to the universal ribosomal protein uS2 family.

This Arthrospira platensis (Spirulina platensis) protein is Small ribosomal subunit protein uS2 (rpsB).